A 201-amino-acid polypeptide reads, in one-letter code: Probable nicotinate-nucleotide adenylyltransferase (201 aa).

The protein belongs to the NadD family.

It carries out the reaction nicotinate beta-D-ribonucleotide + ATP + H(+) = deamido-NAD(+) + diphosphate. It functions in the pathway cofactor biosynthesis; NAD(+) biosynthesis; deamido-NAD(+) from nicotinate D-ribonucleotide: step 1/1. Functionally, catalyzes the reversible adenylation of nicotinate mononucleotide (NaMN) to nicotinic acid adenine dinucleotide (NaAD). This Clostridium botulinum (strain Langeland / NCTC 10281 / Type F) protein is Probable nicotinate-nucleotide adenylyltransferase.